The following is a 957-amino-acid chain: Glycine dehydrogenase (decarboxylating) (957 aa).

The residue at position 704 (Lys-704) is an N6-(pyridoxal phosphate)lysine.

This sequence belongs to the GcvP family. As to quaternary structure, the glycine cleavage system is composed of four proteins: P, T, L and H. Pyridoxal 5'-phosphate is required as a cofactor.

The catalysed reaction is N(6)-[(R)-lipoyl]-L-lysyl-[glycine-cleavage complex H protein] + glycine + H(+) = N(6)-[(R)-S(8)-aminomethyldihydrolipoyl]-L-lysyl-[glycine-cleavage complex H protein] + CO2. The glycine cleavage system catalyzes the degradation of glycine. The P protein binds the alpha-amino group of glycine through its pyridoxal phosphate cofactor; CO(2) is released and the remaining methylamine moiety is then transferred to the lipoamide cofactor of the H protein. In Bordetella petrii (strain ATCC BAA-461 / DSM 12804 / CCUG 43448), this protein is Glycine dehydrogenase (decarboxylating).